We begin with the raw amino-acid sequence, 309 residues long: MPARLGLSAAFRSLSIRTNQLPQQQSIAAAVQARTLITDSTTSSRLPPRVQIQQQQQQRTQPYSTETTPPPNSNNGDLAGIEGQPPVEVTPENAAALSQLSEIAYGVKAADVAIEGHKYGLPTLPLPSELHHKYRYSEVVNHATKLLMKDGKLSKAQRDMAMILNYLRSSPPPKLNPSRPLIPGHPPASHLPLNPVEYLTVAIDSVAPLIKMRGYKGLAGGGRSLEVPQPIPARQRRSTAFKWILDVVNKKPSKGSGRTMFAHRVAEEIVAVVEGRSSVWDKRMLIHKLGTANRANLNSPALQLKGKRF.

Positions aspartate 39–proline 86 are disordered. Residues glutamine 51–glutamine 61 show a composition bias toward low complexity.

It belongs to the universal ribosomal protein uS7 family. As to quaternary structure, component of the mitochondrial small ribosomal subunit (mt-SSU). Mature N.crassa 74S mitochondrial ribosomes consist of a small (37S) and a large (54S) subunit. The 37S small subunit contains a 16S ribosomal RNA (16S mt-rRNA) and 32 different proteins. The 54S large subunit contains a 23S rRNA (23S mt-rRNA) and 42 different proteins.

Its subcellular location is the mitochondrion. Component of the mitochondrial ribosome (mitoribosome), a dedicated translation machinery responsible for the synthesis of mitochondrial genome-encoded proteins, including at least some of the essential transmembrane subunits of the mitochondrial respiratory chain. The mitoribosomes are attached to the mitochondrial inner membrane and translation products are cotranslationally integrated into the membrane. The chain is Small ribosomal subunit protein uS7m (rsm7) from Neurospora crassa (strain ATCC 24698 / 74-OR23-1A / CBS 708.71 / DSM 1257 / FGSC 987).